The sequence spans 235 residues: Large ribosomal subunit protein uL1 (235 aa).

The protein belongs to the universal ribosomal protein uL1 family. Part of the 50S ribosomal subunit.

Its function is as follows. Binds directly to 23S rRNA. The L1 stalk is quite mobile in the ribosome, and is involved in E site tRNA release. Protein L1 is also a translational repressor protein, it controls the translation of the L11 operon by binding to its mRNA. This chain is Large ribosomal subunit protein uL1, found in Mycolicibacterium vanbaalenii (strain DSM 7251 / JCM 13017 / BCRC 16820 / KCTC 9966 / NRRL B-24157 / PYR-1) (Mycobacterium vanbaalenii).